We begin with the raw amino-acid sequence, 399 residues long: Pyridinium-3,5-bisthiocarboxylic acid mononucleotide nickel insertion protein (399 aa).

Belongs to the LarC family.

It catalyses the reaction Ni(II)-pyridinium-3,5-bisthiocarboxylate mononucleotide = pyridinium-3,5-bisthiocarboxylate mononucleotide + Ni(2+). Involved in the biosynthesis of a nickel-pincer cofactor ((SCS)Ni(II) pincer complex). Binds Ni(2+), and functions in nickel delivery to pyridinium-3,5-bisthiocarboxylic acid mononucleotide (P2TMN), to form the mature cofactor. Is thus probably required for the activation of nickel-pincer cofactor-dependent enzymes. This Clostridium kluyveri (strain ATCC 8527 / DSM 555 / NBRC 12016 / NCIMB 10680 / K1) protein is Pyridinium-3,5-bisthiocarboxylic acid mononucleotide nickel insertion protein.